The sequence spans 354 residues: UDP-N-acetylglucosamine--N-acetylmuramyl-(pentapeptide) pyrophosphoryl-undecaprenol N-acetylglucosamine transferase (354 aa).

Residues 12 to 14 (TGG), N124, R163, S187, I240, and Q285 each bind UDP-N-acetyl-alpha-D-glucosamine.

This sequence belongs to the glycosyltransferase 28 family. MurG subfamily.

Its subcellular location is the cell inner membrane. The catalysed reaction is di-trans,octa-cis-undecaprenyl diphospho-N-acetyl-alpha-D-muramoyl-L-alanyl-D-glutamyl-meso-2,6-diaminopimeloyl-D-alanyl-D-alanine + UDP-N-acetyl-alpha-D-glucosamine = di-trans,octa-cis-undecaprenyl diphospho-[N-acetyl-alpha-D-glucosaminyl-(1-&gt;4)]-N-acetyl-alpha-D-muramoyl-L-alanyl-D-glutamyl-meso-2,6-diaminopimeloyl-D-alanyl-D-alanine + UDP + H(+). The protein operates within cell wall biogenesis; peptidoglycan biosynthesis. Cell wall formation. Catalyzes the transfer of a GlcNAc subunit on undecaprenyl-pyrophosphoryl-MurNAc-pentapeptide (lipid intermediate I) to form undecaprenyl-pyrophosphoryl-MurNAc-(pentapeptide)GlcNAc (lipid intermediate II). In Methylococcus capsulatus (strain ATCC 33009 / NCIMB 11132 / Bath), this protein is UDP-N-acetylglucosamine--N-acetylmuramyl-(pentapeptide) pyrophosphoryl-undecaprenol N-acetylglucosamine transferase.